A 98-amino-acid chain; its full sequence is NADH-ubiquinone oxidoreductase chain 4L (98 aa).

Transmembrane regions (helical) follow at residues 1–21, 28–48, and 59–79; these read MAPINLNLILAFSLALLGVLI, STLLCLEGMMLSLFILMTLLI, and APLILLVFSACEAGVGLALLV.

This sequence belongs to the complex I subunit 4L family. As to quaternary structure, core subunit of respiratory chain NADH dehydrogenase (Complex I) which is composed of 45 different subunits.

It is found in the mitochondrion inner membrane. The catalysed reaction is a ubiquinone + NADH + 5 H(+)(in) = a ubiquinol + NAD(+) + 4 H(+)(out). Its function is as follows. Core subunit of the mitochondrial membrane respiratory chain NADH dehydrogenase (Complex I) which catalyzes electron transfer from NADH through the respiratory chain, using ubiquinone as an electron acceptor. Part of the enzyme membrane arm which is embedded in the lipid bilayer and involved in proton translocation. The protein is NADH-ubiquinone oxidoreductase chain 4L (MT-ND4L) of Perameles gunnii (Eastern barred bandicoot).